A 465-amino-acid chain; its full sequence is MMKSRFCPSPTGLMHLGNARTALFNYLFAKSKDGIFLLRIEDTDVERSKETFDLGLQEDLRWLNLEWQEGPGADEGNGPYHQSKRQAIYDDYYQRLEEADQAYPCFCSEEQLRLSRKIQRSAGKPPRYAGTCRSLSAAEIEKKKAEGLQPALRFRVPDDEVVVFADLVRGEQRFQTNDIGDFIIRRANGTSPFMFCNAIDDALMGVSHVLRGEDHLTNTPRQLLILQALELPVPTYAHIALIVGPDGSPLSKRHGSRGIKELRDNGYLPLALTNYLARLGHYYASDELLSLAELAKGFNVESLSKSPAKFNAQQLDYWQKQTVNQLPNDDFWEWAGSELQSQIPTDKDDLFLTTVKPNVSFPRDVAYWVNVCFGKTLNLETAQSELLRATGNRYFEEAFEAFKKFGKDLNSVVSHLKEKLNLKGKPLYQPLRIALTGAEHGPELAKLILIMDYETIQNRLQEACQ.

Positions 8–18 (PSPTGLMHLGN) match the 'HIGH' region motif. The 'KMSKS' region signature appears at 249–253 (PLSKR). K252 provides a ligand contact to ATP.

It belongs to the class-I aminoacyl-tRNA synthetase family. Glutamate--tRNA ligase type 1 subfamily. As to quaternary structure, monomer.

The protein localises to the cytoplasm. It carries out the reaction tRNA(Glu) + L-glutamate + ATP = L-glutamyl-tRNA(Glu) + AMP + diphosphate. Catalyzes the attachment of glutamate to tRNA(Glu) in a two-step reaction: glutamate is first activated by ATP to form Glu-AMP and then transferred to the acceptor end of tRNA(Glu). In Coxiella burnetii (strain RSA 331 / Henzerling II), this protein is Glutamate--tRNA ligase 2.